Reading from the N-terminus, the 218-residue chain is Ribose-5-phosphate isomerase A (218 aa).

Residues Lys7, 28–31 (TGST), 81–84 (DGAD), and 94–97 (KGGG) contribute to the substrate site. Glu103 functions as the Proton acceptor in the catalytic mechanism. Lys121 contributes to the substrate binding site.

Belongs to the ribose 5-phosphate isomerase family. As to quaternary structure, homodimer.

The catalysed reaction is aldehydo-D-ribose 5-phosphate = D-ribulose 5-phosphate. It participates in carbohydrate degradation; pentose phosphate pathway; D-ribose 5-phosphate from D-ribulose 5-phosphate (non-oxidative stage): step 1/1. Functionally, catalyzes the reversible conversion of ribose-5-phosphate to ribulose 5-phosphate. This chain is Ribose-5-phosphate isomerase A, found in Vibrio vulnificus (strain YJ016).